The primary structure comprises 117 residues: UPF0125 protein VV0820 (117 aa).

Residues 90–117 form a disordered region; the sequence is RKRAEQAKESGAADPVTGGKPSPLRKAD.

This sequence belongs to the UPF0125 (RnfH) family.

This is UPF0125 protein VV0820 from Vibrio vulnificus (strain YJ016).